The primary structure comprises 498 residues: Na(+)/H(+) exchange regulatory cofactor NHE-RF4 (498 aa).

4 PDZ domains span residues 49-130, 157-235, 263-346, and 394-475; these read FCLL…LAQH, LCHV…AGLE, CLNI…VDPE, and QCFL…GARN. Phosphoserine is present on serine 329.

Interacts with the C-terminal region of GUCY2C. Interacts with C-terminal region of SLC9A3 and the interactions decrease in response to elevated calcium ion levels. Interacts with the C-terminal region of SLC34A1. Interacts with USP2 isoform 2. Interacts (via the third PDZ domain) with SLC26A3 (via PDZ-binding motif). This interaction leads to decreased expression of SLC26A3 on the cell membrane resulting in its reduced exchanger activity. Post-translationally, phosphorylation at Ser-329 negatively regulates its interaction with SLC26A3. As to expression, expressed in kidney and small intestine. Not detected in heart, brain, spleen, lung, liver, skeletal muscle or testis.

It is found in the cell membrane. The protein resides in the cytoplasm. In terms of biological role, acts as a regulatory protein that associates with GUCY2C and negatively modulates its heat-stable enterotoxin-mediated activation. Stimulates SLC9A3 activity in the presence of elevated calcium ions. This Mus musculus (Mouse) protein is Na(+)/H(+) exchange regulatory cofactor NHE-RF4 (Nherf4).